The primary structure comprises 322 residues: MFEIHPVKKVSVVIPVYNEQESLPELIRRTTTACESLGKEYEILLIDDGSSDNSAHMLVEASQAENSHIVSILLNRNYGQHSAIMAGFSHVTGDLIITLDADLQNPPEEIPRLVAKADEGYDVVGTVRQNRQDSWFRKTASKMINRLIQRTTGKAMGDYGCMLRAYRRHIVDAMLHCHERSTFIPILANIFARRAIEIPVHHSEREFGESKYSFMRLINLMYDLVTCLTTTPLRMLSLLGSIIAIGGFSIAVLLVILRLTFGPQWAAEGVFMLFAVLFTFIGAQFIGMGLLGEYIGRIYTDVRARPRYFVQQVIRPSSKENE.

The Cytoplasmic portion of the chain corresponds to 1 to 235; the sequence is MFEIHPVKKV…TCLTTTPLRM (235 aa). The helical transmembrane segment at 236–256 threads the bilayer; that stretch reads LSLLGSIIAIGGFSIAVLLVI. The Periplasmic portion of the chain corresponds to 257–269; that stretch reads LRLTFGPQWAAEG. A helical transmembrane segment spans residues 270-290; that stretch reads VFMLFAVLFTFIGAQFIGMGL. At 291-322 the chain is on the cytoplasmic side; the sequence is LGEYIGRIYTDVRARPRYFVQQVIRPSSKENE.

Belongs to the glycosyltransferase 2 family.

It is found in the cell inner membrane. The enzyme catalyses UDP-4-deoxy-4-formamido-beta-L-arabinose + di-trans,octa-cis-undecaprenyl phosphate = 4-deoxy-4-formamido-alpha-L-arabinopyranosyl di-trans,octa-cis-undecaprenyl phosphate + UDP. The protein operates within glycolipid biosynthesis; 4-amino-4-deoxy-alpha-L-arabinose undecaprenyl phosphate biosynthesis; 4-amino-4-deoxy-alpha-L-arabinose undecaprenyl phosphate from UDP-4-deoxy-4-formamido-beta-L-arabinose and undecaprenyl phosphate: step 1/2. It functions in the pathway bacterial outer membrane biogenesis; lipopolysaccharide biosynthesis. Catalyzes the transfer of 4-deoxy-4-formamido-L-arabinose from UDP to undecaprenyl phosphate. The modified arabinose is attached to lipid A and is required for resistance to polymyxin and cationic antimicrobial peptides. The sequence is that of Undecaprenyl-phosphate 4-deoxy-4-formamido-L-arabinose transferase from Escherichia coli O139:H28 (strain E24377A / ETEC).